Reading from the N-terminus, the 346-residue chain is Sensor protein kinase GraS (346 aa).

Transmembrane regions (helical) follow at residues 18–38 (IFWI…DYDF) and 43–63 (LFYI…LTFF). Residues 126 to 332 (EFVHDIKTPV…TVKLIFPLQN (207 aa)) enclose the Histidine kinase domain.

In terms of assembly, interacts with GraX.

Its subcellular location is the cell membrane. It carries out the reaction ATP + protein L-histidine = ADP + protein N-phospho-L-histidine.. Member of the two-component regulatory system GraR/GraS involved in resistance against cationic antimicrobial peptides (CAMPs). Functions as a sensor protein kinase which phosphorylates GraR through the auxiliary protein GraX. In turn, GraR up-regulates many genes such as adhesins, exoproteins, transporters, toxins, and proteins involved in cell wall synthesis. Down-regulates the expression of many genes involved in RNA and amino acid synthesis or glycolysis. In Staphylococcus aureus (strain MRSA252), this protein is Sensor protein kinase GraS (graS).